The sequence spans 288 residues: ATP synthase gamma chain (288 aa).

The protein belongs to the ATPase gamma chain family. As to quaternary structure, F-type ATPases have 2 components, CF(1) - the catalytic core - and CF(0) - the membrane proton channel. CF(1) has five subunits: alpha(3), beta(3), gamma(1), delta(1), epsilon(1). CF(0) has three main subunits: a, b and c.

It is found in the cell inner membrane. Its function is as follows. Produces ATP from ADP in the presence of a proton gradient across the membrane. The gamma chain is believed to be important in regulating ATPase activity and the flow of protons through the CF(0) complex. This Rickettsia canadensis (strain McKiel) protein is ATP synthase gamma chain.